A 394-amino-acid chain; its full sequence is Cytochrome b561 and DOMON domain-containing protein At4g12980 (394 aa).

Positions 1 to 24 (MDSSYLRISLSFLFWALLLSPAVS) are cleaved as a signal peptide. A DOMON domain is found at 49 to 169 (LKAILHYSYD…GKVNQVWQVG (121 aa)). A Cytochrome b561 domain is found at 184–381 (GPNLNSVGSL…LEVVTWVIVL (198 aa)). The next 2 helical transmembrane spans lie at 220–240 (IHGI…AMIA) and 252–272 (AWFY…VAGW). Heme b-binding residues include histidine 221, histidine 257, and histidine 290. Residues 292–312 (NIGICLFSIATLQMFAMLLRP) form a helical membrane-spanning segment. Histidine 326 contacts heme b. Helical transmembrane passes span 328–348 (GVGY…LSIL) and 361–381 (VIGT…VIVL).

Requires heme b as cofactor.

It localises to the membrane. Its function is as follows. May act as a catecholamine-responsive trans-membrane electron transporter. The protein is Cytochrome b561 and DOMON domain-containing protein At4g12980 of Arabidopsis thaliana (Mouse-ear cress).